A 462-amino-acid polypeptide reads, in one-letter code: Bifunctional protein GlmU (462 aa).

Residues 1 to 230 are pyrophosphorylase; sequence MVNKNAIILA…FEESMGVNDR (230 aa). UDP-N-acetyl-alpha-D-glucosamine contacts are provided by residues 9–12, K23, Q73, 78–79, 101–103, G140, E155, N170, and N228; these read LAAG, GT, and SGD. D103 is a Mg(2+) binding site. N228 serves as a coordination point for Mg(2+). Residues 231-251 form a linker region; it reads VALSQATKVMRQRINTAHMRN. Residues 252-462 form an N-acetyltransferase region; that stretch reads GVTLIDPEST…LPVAKDEEWQ (211 aa). Positions 333 and 351 each coordinate UDP-N-acetyl-alpha-D-glucosamine. H363 (proton acceptor) is an active-site residue. 2 residues coordinate UDP-N-acetyl-alpha-D-glucosamine: Y366 and N377. Residues 386–387, S405, A423, and R440 contribute to the acetyl-CoA site; that span reads NY.

In the N-terminal section; belongs to the N-acetylglucosamine-1-phosphate uridyltransferase family. The protein in the C-terminal section; belongs to the transferase hexapeptide repeat family. In terms of assembly, homotrimer. It depends on Mg(2+) as a cofactor.

The protein resides in the cytoplasm. It catalyses the reaction alpha-D-glucosamine 1-phosphate + acetyl-CoA = N-acetyl-alpha-D-glucosamine 1-phosphate + CoA + H(+). It carries out the reaction N-acetyl-alpha-D-glucosamine 1-phosphate + UTP + H(+) = UDP-N-acetyl-alpha-D-glucosamine + diphosphate. It functions in the pathway nucleotide-sugar biosynthesis; UDP-N-acetyl-alpha-D-glucosamine biosynthesis; N-acetyl-alpha-D-glucosamine 1-phosphate from alpha-D-glucosamine 6-phosphate (route II): step 2/2. Its pathway is nucleotide-sugar biosynthesis; UDP-N-acetyl-alpha-D-glucosamine biosynthesis; UDP-N-acetyl-alpha-D-glucosamine from N-acetyl-alpha-D-glucosamine 1-phosphate: step 1/1. The protein operates within bacterial outer membrane biogenesis; LPS lipid A biosynthesis. Its function is as follows. Catalyzes the last two sequential reactions in the de novo biosynthetic pathway for UDP-N-acetylglucosamine (UDP-GlcNAc). The C-terminal domain catalyzes the transfer of acetyl group from acetyl coenzyme A to glucosamine-1-phosphate (GlcN-1-P) to produce N-acetylglucosamine-1-phosphate (GlcNAc-1-P), which is converted into UDP-GlcNAc by the transfer of uridine 5-monophosphate (from uridine 5-triphosphate), a reaction catalyzed by the N-terminal domain. The protein is Bifunctional protein GlmU of Latilactobacillus sakei subsp. sakei (strain 23K) (Lactobacillus sakei subsp. sakei).